A 387-amino-acid chain; its full sequence is V-set and immunoglobulin domain-containing protein 1 (387 aa).

A signal peptide spans 1–21 (MVFAFWKVFLILSCLAGQVSV). The 111-residue stretch at 22 to 132 (VQVTIPDGFV…DFLGQNQGIL (111 aa)) folds into the Ig-like V-type domain. Residues 22 to 232 (VQVTIPDGFV…EIDLTSSHPE (211 aa)) are Extracellular-facing. Residues N32 and N38 are each glycosylated (N-linked (GlcNAc...) asparagine). A disulfide bridge connects residues C43 and C116. N-linked (GlcNAc...) asparagine glycosylation is found at N133, N200, and N219. The region spanning 140–227 (PSKPLCSVQG…GNSSCEIDLT (88 aa)) is the Ig-like C2-type domain. C161 and C211 are oxidised to a cystine. A helical transmembrane segment spans residues 233–253 (VGIIVGALIGSLVGAAIIISV). Topologically, residues 254-387 (VCFARNKAKA…SEDEKGVVKA (134 aa)) are cytoplasmic. The tract at residues 266–387 (KERNSKTIAE…SEDEKGVVKA (122 aa)) is disordered. The segment covering 284–296 (PRGESEAMPREDA) has biased composition (basic and acidic residues). The span at 299-308 (LEVTLPSSIH) shows a compositional bias: polar residues. Pro residues predominate over residues 325-335 (TQEPAPEPAPG). The segment covering 344–368 (LDIELELEPETQSELEPEPEPEPES) has biased composition (acidic residues).

In terms of processing, highly N-glycosylated. Appears not to contain significant amounts of O-linked carbohydrates or sialic acid in its sugar moieties. In terms of tissue distribution, detected only in stomach mucosa and testis, and to a much lesser level in pancreas (at protein level). Detected in gastric cancers (31%), esophageal carcinomas (50%) and ovarian cancers (23%).

It is found in the membrane. In Homo sapiens (Human), this protein is V-set and immunoglobulin domain-containing protein 1 (VSIG1).